We begin with the raw amino-acid sequence, 1142 residues long: Protein lin-25 (1142 aa).

The span at 600–613 shows a compositional bias: acidic residues; it reads IEEEIEEEEEDIEP. The segment at 600-706 is disordered; the sequence is IEEEIEEEEE…EKPKEPLEPT (107 aa). Composition is skewed to basic and acidic residues over residues 614–627, 652–662, and 679–703; these read EVVKEMKESGTEKE, DEQKTEEKMDT, and DPPKVEEPAERINQEKPEEKPKEPL.

The protein resides in the nucleus. It is found in the cytoplasm. Functionally, participates in the inductive signaling pathway downstream of let-60 Ras and the RAF/MAP kinase cascade to regulate specification and differentiation of many cell types. Positively regulates the fate of vulval precursor cells. Required for induction of the P12 and excretory duct cell fates. In males, it is also required for proper formation of spicules. Does not function in the signaling pathway that promotes exit from pachytene. This chain is Protein lin-25, found in Caenorhabditis briggsae.